The sequence spans 489 residues: Dipeptide and tripeptide permease B (489 aa).

Topologically, residues 1–27 are cytoplasmic; that stretch reads MNTTTPMGMLQQPRPFFMIFFVELWER. Residues 28 to 48 traverse the membrane as a helical segment; the sequence is FGYYGVQGVLAVFFVKQLGFS. The Periplasmic segment spans residues 49–52; that stretch reads QEQA. The chain crosses the membrane as a helical span at residues 53–73; the sequence is FVTFGAFAALVYGLISIGGYV. Over 74-82 the chain is Cytoplasmic; sequence GDHLLGTKR. Residues 83-103 traverse the membrane as a helical segment; that stretch reads TIVLGALVLAIGYFMTGLSLL. At 104–106 the chain is on the periplasmic side; that stretch reads KPD. Residues 107-127 form a helical membrane-spanning segment; the sequence is LIFIALGTIAVGNGLFKANPA. Over 128–146 the chain is Cytoplasmic; that stretch reads SLLSKCYPPKAPRLDGAFT. Residues 147–167 form a helical membrane-spanning segment; it reads LFYMSINIGSLIALSLAPVIA. Topologically, residues 168–172 are periplasmic; that stretch reads DRFGY. A helical membrane pass occupies residues 173–193; sequence SVTYNLCGAGLIIALLVYIAC. Residues 194-210 lie on the Cytoplasmic side of the membrane; sequence RGMVKDIGSEPDFRPMS. A helical membrane pass occupies residues 211-231; it reads FSKLLYVLLGSVVMIFVCAWL. At 232–233 the chain is on the periplasmic side; that stretch reads MH. Residues 234–254 traverse the membrane as a helical segment; the sequence is NVEVANLVLIVLSIVVTIIFF. Residues 255–267 lie on the Cytoplasmic side of the membrane; it reads RQAFKLDKTGRNK. A helical membrane pass occupies residues 268–288; it reads MFVAFVLMLEAVVFYILYAQM. The Periplasmic segment spans residues 289 to 311; it reads PTSLNFFAINNVHHEILGFSINP. The chain crosses the membrane as a helical span at residues 312–332; that stretch reads VSFQALNPFWVVLASPILAGI. The Cytoplasmic portion of the chain corresponds to 333-350; that stretch reads YTHLGSKGKDLSMPMKFT. A helical transmembrane segment spans residues 351 to 371; the sequence is LGMFMCSLGFLTAAAAGMWFA. Residues 372-380 are Periplasmic-facing; that stretch reads DAQGLTSPW. Residues 381 to 401 form a helical membrane-spanning segment; that stretch reads FIVLVYLFQSLGELFISALGL. Over 402-411 the chain is Cytoplasmic; it reads AMVAALVPQH. The chain crosses the membrane as a helical span at residues 412 to 432; that stretch reads LMGFILGISFLTQAAAFLLGG. Over 433 to 456 the chain is Periplasmic; the sequence is YVATFTAVPDNITDPLETLPVYTN. A helical membrane pass occupies residues 457–477; sequence VFGKIGLVTLGVAVVMLLMVP. Topologically, residues 478-489 are cytoplasmic; the sequence is WLKRMIAAPESH.

Belongs to the major facilitator superfamily. Proton-dependent oligopeptide transporter (POT/PTR) (TC 2.A.17) family. DtpB subfamily.

It is found in the cell inner membrane. Proton-dependent permease that transports di- and tripeptides. The sequence is that of Dipeptide and tripeptide permease B from Shigella dysenteriae serotype 1 (strain Sd197).